The following is a 557-amino-acid chain: Tryptophan 2-monooxygenase (557 aa).

Positions 49, 69, 71, 77, and 98 each coordinate FMN. Arg98 lines the substrate pocket.

Belongs to the tryptophan 2-monooxygenase family. Monomer. FMN serves as cofactor.

The enzyme catalyses L-tryptophan + O2 = indole-3-acetamide + CO2 + H2O. The protein operates within plant hormone metabolism; auxin biosynthesis. This is Tryptophan 2-monooxygenase (iaaM) from Pseudomonas savastanoi (Pseudomonas syringae pv. savastanoi).